A 435-amino-acid polypeptide reads, in one-letter code: Tungsten-containing formylmethanofuran dehydrogenase 2 subunit B (435 aa).

Position 121 (selenocysteine 121) is a non-standard amino acid, selenocysteine.

This sequence belongs to the FwdB family. As to quaternary structure, this enzyme is composed of six subunits FwdA, FwdC, FwdD, FwdE, FwdF and FwdG. It depends on W-bis(molybdopterin guanine dinucleotide) as a cofactor.

It catalyses the reaction N-formylmethanofuran + 2 oxidized [2Fe-2S]-[ferredoxin] + H2O = methanofuran + 2 reduced [2Fe-2S]-[ferredoxin] + CO2 + H(+). Its pathway is one-carbon metabolism; methanogenesis from CO(2); 5,10-methenyl-5,6,7,8-tetrahydromethanopterin from CO(2): step 1/3. Its function is as follows. Catalyzes the reversible oxidation of CO(2) and methanofuran (MFR) to N-formylmethanofuran (CHO-MFR). This enzyme is oxygen-labile. The protein is Tungsten-containing formylmethanofuran dehydrogenase 2 subunit B (fwdB) of Methanocaldococcus jannaschii (strain ATCC 43067 / DSM 2661 / JAL-1 / JCM 10045 / NBRC 100440) (Methanococcus jannaschii).